Here is a 313-residue protein sequence, read N- to C-terminus: Aspartate carbamoyltransferase catalytic subunit (313 aa).

Carbamoyl phosphate contacts are provided by Arg59 and Thr60. Residue Lys87 participates in L-aspartate binding. Carbamoyl phosphate is bound by residues Arg109, His137, and Gln140. 2 residues coordinate L-aspartate: Arg170 and Arg224. 2 residues coordinate carbamoyl phosphate: Gly265 and Pro266.

This sequence belongs to the aspartate/ornithine carbamoyltransferase superfamily. ATCase family. In terms of assembly, heterododecamer (2C3:3R2) of six catalytic PyrB chains organized as two trimers (C3), and six regulatory PyrI chains organized as three dimers (R2).

It catalyses the reaction carbamoyl phosphate + L-aspartate = N-carbamoyl-L-aspartate + phosphate + H(+). The protein operates within pyrimidine metabolism; UMP biosynthesis via de novo pathway; (S)-dihydroorotate from bicarbonate: step 2/3. Its function is as follows. Catalyzes the condensation of carbamoyl phosphate and aspartate to form carbamoyl aspartate and inorganic phosphate, the committed step in the de novo pyrimidine nucleotide biosynthesis pathway. The sequence is that of Aspartate carbamoyltransferase catalytic subunit from Agrobacterium fabrum (strain C58 / ATCC 33970) (Agrobacterium tumefaciens (strain C58)).